The sequence spans 225 residues: Cytidylate kinase (225 aa).

12-20 (GPSGAGKGT) lines the ATP pocket.

The protein belongs to the cytidylate kinase family. Type 1 subfamily.

Its subcellular location is the cytoplasm. The enzyme catalyses CMP + ATP = CDP + ADP. It carries out the reaction dCMP + ATP = dCDP + ADP. The polypeptide is Cytidylate kinase (Pectobacterium carotovorum subsp. carotovorum (strain PC1)).